A 156-amino-acid chain; its full sequence is Ribosomal RNA large subunit methyltransferase H (156 aa).

S-adenosyl-L-methionine is bound by residues Leu73, Gly104, and 123–128 (LSSLTL).

This sequence belongs to the RNA methyltransferase RlmH family. As to quaternary structure, homodimer.

The protein resides in the cytoplasm. The enzyme catalyses pseudouridine(1915) in 23S rRNA + S-adenosyl-L-methionine = N(3)-methylpseudouridine(1915) in 23S rRNA + S-adenosyl-L-homocysteine + H(+). In terms of biological role, specifically methylates the pseudouridine at position 1915 (m3Psi1915) in 23S rRNA. The sequence is that of Ribosomal RNA large subunit methyltransferase H from Neisseria meningitidis serogroup C (strain 053442).